We begin with the raw amino-acid sequence, 638 residues long: Trichohyalin-like protein 1 (638 aa).

In terms of domain architecture, EF-hand spans 49-84 (HVFHAVERKLNLLNFDRDGTISFEEFVLAIFSLLNP). Positions 134-638 (SEMASSGQPS…ALEAESLEAQ (505 aa)) are disordered. Positions 166 to 179 (LPRNVSEPNDPENQ) are enriched in polar residues. Composition is skewed to basic and acidic residues over residues 221–246 (IPRE…QRPT), 294–309 (DDTK…KDAG), and 318–328 (EEPKADAKVAE). Over residues 343-357 (DQSVQSRSRNVSETS) the composition is skewed to polar residues. 6 stretches are compositionally biased toward basic and acidic residues: residues 358-372 (SRGE…HERI), 395-409 (REND…KDPS), 419-435 (EIKE…HSEE), 479-490 (RIQDKPVRKEDH), 526-548 (AEPH…KQES), and 622-631 (AGRENRKALE).

Belongs to the S-100 family.

The protein is Trichohyalin-like protein 1 (Tchhl1) of Mus musculus (Mouse).